The primary structure comprises 206 residues: CBS domain-containing protein CBSX3, mitochondrial (206 aa).

Residues 1 to 39 (MQGVIRSFVSGGNVVKGSVLQHLRVINPAIQPSVFCSRS) constitute a mitochondrion transit peptide. 2 consecutive CBS domains span residues 61–127 (MKSK…GRSS) and 136–194 (MTEE…HREE).

The protein resides in the mitochondrion. The chain is CBS domain-containing protein CBSX3, mitochondrial (CBSX3) from Arabidopsis thaliana (Mouse-ear cress).